The following is a 164-amino-acid chain: 6,7-dimethyl-8-ribityllumazine synthase (164 aa).

Residues phenylalanine 22, 56 to 58, and 80 to 82 contribute to the 5-amino-6-(D-ribitylamino)uracil site; these read AWE and AVI. 85–86 serves as a coordination point for (2S)-2-hydroxy-3-oxobutyl phosphate; the sequence is DT. Histidine 88 (proton donor) is an active-site residue. A 5-amino-6-(D-ribitylamino)uracil-binding site is contributed by leucine 113. Arginine 127 lines the (2S)-2-hydroxy-3-oxobutyl phosphate pocket.

It belongs to the DMRL synthase family.

It carries out the reaction (2S)-2-hydroxy-3-oxobutyl phosphate + 5-amino-6-(D-ribitylamino)uracil = 6,7-dimethyl-8-(1-D-ribityl)lumazine + phosphate + 2 H2O + H(+). It functions in the pathway cofactor biosynthesis; riboflavin biosynthesis; riboflavin from 2-hydroxy-3-oxobutyl phosphate and 5-amino-6-(D-ribitylamino)uracil: step 1/2. Its function is as follows. Catalyzes the formation of 6,7-dimethyl-8-ribityllumazine by condensation of 5-amino-6-(D-ribitylamino)uracil with 3,4-dihydroxy-2-butanone 4-phosphate. This is the penultimate step in the biosynthesis of riboflavin. This Gemmatimonas aurantiaca (strain DSM 14586 / JCM 11422 / NBRC 100505 / T-27) protein is 6,7-dimethyl-8-ribityllumazine synthase.